We begin with the raw amino-acid sequence, 178 residues long: Large ribosomal subunit protein uL6 (178 aa).

It belongs to the universal ribosomal protein uL6 family. As to quaternary structure, part of the 50S ribosomal subunit.

Its function is as follows. This protein binds to the 23S rRNA, and is important in its secondary structure. It is located near the subunit interface in the base of the L7/L12 stalk, and near the tRNA binding site of the peptidyltransferase center. The polypeptide is Large ribosomal subunit protein uL6 (Exiguobacterium sibiricum (strain DSM 17290 / CCUG 55495 / CIP 109462 / JCM 13490 / 255-15)).